The sequence spans 357 residues: sn-glycerol-3-phosphate import ATP-binding protein UgpC (357 aa).

An ABC transporter domain is found at 4–235; sequence LKLQAVTKSY…PASLFVASFI (232 aa). Residue 37–44 participates in ATP binding; sequence GPSGCGKS.

The protein belongs to the ABC transporter superfamily. sn-glycerol-3-phosphate importer (TC 3.A.1.1.3) family. In terms of assembly, the complex is composed of two ATP-binding proteins (UgpC), two transmembrane proteins (UgpA and UgpE) and a solute-binding protein (UgpB).

The protein resides in the cell inner membrane. The catalysed reaction is sn-glycerol 3-phosphate(out) + ATP + H2O = sn-glycerol 3-phosphate(in) + ADP + phosphate + H(+). Part of the ABC transporter complex UgpBAEC involved in sn-glycerol-3-phosphate (G3P) import. Responsible for energy coupling to the transport system. The sequence is that of sn-glycerol-3-phosphate import ATP-binding protein UgpC from Pectobacterium atrosepticum (strain SCRI 1043 / ATCC BAA-672) (Erwinia carotovora subsp. atroseptica).